The following is a 261-amino-acid chain: Epidermal growth factor-binding protein type B (261 aa).

A signal peptide spans 1–16 (MWFLILFLALSLGGID). Positions 17–24 (AAPPLQSR) are cleaved as a propeptide — activation peptide. Residues 25-258 (VVGGFNCKKN…FNSWIKDTMM (234 aa)) enclose the Peptidase S1 domain. 5 disulfides stabilise this stretch: Cys31-Cys173, Cys50-Cys66, Cys152-Cys219, Cys184-Cys198, and Cys209-Cys234. His65 serves as the catalytic Charge relay system. Residue Asn102 is glycosylated (N-linked (GlcNAc...) asparagine). Catalysis depends on Asp120, which acts as the Charge relay system. Ser213 acts as the Charge relay system in catalysis.

This sequence belongs to the peptidase S1 family. Kallikrein subfamily.

The catalysed reaction is Hydrolyzes mouse Ren2 protein (a species of prorenin present in the submandibular gland) on the carboxy side of the arginine residue at the Lys-Arg-|- pair in the N-terminus, to yield mature renin.. Functionally, cleaves REN2 at a dibasic site to yield mature renin. The chain is Epidermal growth factor-binding protein type B (Egfbp2) from Mus musculus (Mouse).